Here is a 226-residue protein sequence, read N- to C-terminus: UPF0173 metal-dependent hydrolase Msed_2125 (226 aa).

Belongs to the UPF0173 family.

This chain is UPF0173 metal-dependent hydrolase Msed_2125, found in Metallosphaera sedula (strain ATCC 51363 / DSM 5348 / JCM 9185 / NBRC 15509 / TH2).